The sequence spans 394 residues: Acetyl-CoA acetyltransferase (394 aa).

Catalysis depends on Cys89, which acts as the Acyl-thioester intermediate. Active-site proton acceptor residues include His350 and Cys380.

Belongs to the thiolase-like superfamily. Thiolase family. Homotetramer.

It is found in the cytoplasm. The catalysed reaction is 2 acetyl-CoA = acetoacetyl-CoA + CoA. The protein operates within biopolymer metabolism; poly-(R)-3-hydroxybutanoate biosynthesis. It functions in the pathway metabolic intermediate biosynthesis; (R)-mevalonate biosynthesis; (R)-mevalonate from acetyl-CoA: step 1/3. The protein is Acetyl-CoA acetyltransferase of Thiocystis violacea.